A 233-amino-acid polypeptide reads, in one-letter code: Protein Mis18-alpha (233 aa).

3 positions are modified to phosphoserine: Ser-36, Ser-39, and Ser-40. The region spanning 80–178 (PLVFLCSGCR…NVEAVESYVL (99 aa)) is the Mis18 domain. 4 residues coordinate Zn(2+): Cys-85, Cys-88, Cys-141, and Cys-144. Residue Lys-162 forms a Glycyl lysine isopeptide (Lys-Gly) (interchain with G-Cter in SUMO2) linkage. The residue at position 233 (Ser-233) is a Phosphoserine.

It belongs to the mis18 family. Homodimer, and heterodimer with OIP5/MIS18B. Identified in a complex containing MIS18A, OIP5/MIS18B, MIS18BP1, RBBP7 and RBBP4.

Its subcellular location is the nucleus. It localises to the chromosome. The protein localises to the centromere. Its function is as follows. Required for recruitment of CENPA to centromeres and normal chromosome segregation during mitosis. The polypeptide is Protein Mis18-alpha (MIS18A) (Plecturocebus moloch (Dusky titi monkey)).